The sequence spans 3313 residues: PHD finger protein rhinoceros (3313 aa).

Over residues 1–16 the composition is skewed to basic residues; sequence MSQRGKRGNQHHHQSH. Residues 1–136 form a disordered region; sequence MSQRGKRGNQ…QGASTSSSWQ (136 aa). 2 stretches are compositionally biased toward low complexity: residues 42–71 and 100–134; these read PPNGATTAAAAIAAAAAAAAAAAAGTATGG and LGAASSSSSITKSKSTKLAKSSSKSKSQGASTSSS. The PHD-type 1 zinc finger occupies 323 to 373; it reads NVICDVCRSPDSEEANEMVFCDNCNICVHQACYGITAIPSGQWLCRTCSMG. The segment at 375-409 adopts a C2HC pre-PHD-type zinc-finger fold; the sequence is TPDCVLCPNKAGAMKSNKSGKHWAHVSCALWIPEV. A PHD-type 2; degenerate zinc finger spans residues 433 to 487; sequence LVCVLCRKRVGSCIQCSKHSMSKGKKENAGGASGGGSASVTSSMHKANKYATGTG. Disordered regions lie at residues 453-526, 708-1076, 1107-1842, 1961-2033, 2104-2136, 2145-2164, 2219-2252, 2353-2374, 2398-2514, 2563-2587, 2647-2679, 2827-2871, 2888-2954, 2978-2998, 3017-3077, 3144-3233, and 3259-3313; these read MSKG…ARAQ, LQSG…TKAA, KEAK…PPSH, AQKE…TMGN, PVTAQSGAGSNSNKLSDYDENTRMQSPFGRMQR, ARRSSSPSSVSESNDQPPAT, AAPQQQTTPTHQQQQQQQQQQQQQRTPNSQFNGG, PAYPAHPAHPAHPAHPAHPAHP, VAAK…PPPM, TTRGQPKPTPAPTAATTTNPLLHPV, ATGTGTSPSKHPAVSAAPVAPAPAPAANSQPPA, SCGL…SSSR, LAGA…IKIR, YEMTRRACPPKKRLTSNYSTP, DFDK…SATT, KAEK…SLPE, and YENS…CEVR. Residues 512 to 526 are compositionally biased toward basic and acidic residues; sequence KNDMTSEERNQARAQ. The span at 735-749 shows a compositional bias: polar residues; that stretch reads KKLNNGAITSRTSSP. The segment covering 760 to 772 has biased composition (low complexity); the sequence is STSTSTATATTAA. Polar residues predominate over residues 792–802; the sequence is GAATGTSTHNK. Composition is skewed to low complexity over residues 803-861 and 894-912; these read TQSQ…ASGI and EAAAGASAASPNSRSATSS. Residues 919 to 934 are compositionally biased toward basic and acidic residues; the sequence is QQRRRQEPERERDGRG. The segment covering 942-955 has biased composition (polar residues); sequence TVPNRTQPTKSKQS. Residues 956–972 show a composition bias toward low complexity; it reads TQADAGSGAGTGAAVET. The segment covering 994 to 1003 has biased composition (acidic residues); it reads ESLSSDESEE. Residues 1015–1025 are compositionally biased toward low complexity; sequence AALSSGLAASG. The span at 1058-1072 shows a compositional bias: polar residues; the sequence is VESNVSDSQNQQTIR. Composition is skewed to basic and acidic residues over residues 1159 to 1168 and 1178 to 1205; these read AADRMREPES and KLKDSGSKQATEADKFGGGDKVRSKEQS. Over residues 1250–1266 the composition is skewed to low complexity; sequence EAKSTAPAAKPTAAKTS. Over residues 1285–1301 the composition is skewed to polar residues; sequence LKSSKPLQDTTFSTANE. 3 stretches are compositionally biased toward low complexity: residues 1308-1324, 1377-1404, and 1451-1464; these read AATTATTTGMTTLGVAT, SSSSSGDSDSSSSSSSSGSSSSSGSGSD, and PAASAAAAAAAAAT. Residues 1475–1485 show a composition bias toward polar residues; the sequence is TARTRQNSTNK. Basic and acidic residues predominate over residues 1551 to 1579; sequence SPEKQTARRKSRADESPKKIPNLEHEINQ. Over residues 1638–1650 the composition is skewed to acidic residues; it reads PVVEPEVETEIEP. Residues 1667–1678 are compositionally biased toward polar residues; that stretch reads TAPTHTQLSANA. Residues 1691–1702 show a composition bias toward pro residues; sequence PAAPLPASPTPT. Basic residues predominate over residues 1722–1734; it reads SRWRSRRRRRRRS. The stretch at 1744–1773 forms a coiled coil; the sequence is HTQHLLNEMEMARELEEERKNELLANASKY. Positions 1753–1765 are enriched in basic and acidic residues; the sequence is EMARELEEERKNE. Composition is skewed to polar residues over residues 1771 to 1781 and 1796 to 1805; these read SKYSASTSSPA and DSNSANSGGD. The segment covering 1806–1819 has biased composition (low complexity); sequence QQQQQQQQPLPQQL. Residues 1823–1832 show a composition bias toward polar residues; the sequence is SPSSEVASTI. The segment covering 1965-1984 has biased composition (low complexity); the sequence is QQQQQQQQQQQQQQQQQQQQ. Polar residues-rich tracts occupy residues 1985–1999 and 2007–2018; these read SCLYGNSSGPNSVAS and MTANSGSYANSL. The segment covering 2019–2033 has biased composition (low complexity); the sequence is TNTPNATPTNATMGN. Positions 2106–2118 are enriched in polar residues; the sequence is TAQSGAGSNSNKL. Low complexity-rich tracts occupy residues 2148–2157 and 2222–2242; these read SSSPSSVSES and QQQTTPTHQQQQQQQQQQQQQ. A compositionally biased stretch (pro residues) spans 2439 to 2451; it reads PVQPQPPTPPAPA. A compositionally biased stretch (gly residues) spans 2479-2488; sequence GSGGSGAPGR. A compositionally biased stretch (low complexity) spans 2658-2679; the sequence is PAVSAAPVAPAPAPAANSQPPA. The segment covering 2891–2900 has biased composition (gly residues); that stretch reads ASGGGAGTAS. Over residues 2909–2924 the composition is skewed to polar residues; the sequence is CSSGSNNDNNGKTGAA. Positions 2935 to 2946 are enriched in basic and acidic residues; sequence KTLESSEDDHQT. A compositionally biased stretch (basic and acidic residues) spans 3017–3026; sequence DFDKGEENNK. Residues 3046–3065 are compositionally biased toward basic residues; sequence KRPKSSKPKKDKKEKKRQKQ. A compositionally biased stretch (polar residues) spans 3179–3198; it reads TSPQGLLLNSFTPHSQNANA. A compositionally biased stretch (low complexity) spans 3268–3290; that stretch reads SASGTGSASSNSCNSNSNNNNNN. Positions 3291 to 3302 are enriched in gly residues; it reads GSGGGAASGGGS.

This sequence belongs to the JADE family.

The protein localises to the nucleus. In terms of biological role, may function as a negative regulator of the EGFR/Ras/MAPK signaling pathway during eye development. This is PHD finger protein rhinoceros (rno) from Drosophila pseudoobscura pseudoobscura (Fruit fly).